Here is a 317-residue protein sequence, read N- to C-terminus: Single myb histone 6 (317 aa).

The 61-residue stretch at 1-61 folds into the HTH myb-type domain; that stretch reads MGAPKQRWTS…KWRNMNVIVS (61 aa). Positions 28–57 form a DNA-binding region, H-T-H motif; sequence WRTILKDPEFSSTLCYRSNVDLKDKWRNMN. The H15 domain occupies 121–189; that stretch reads KSHRLDNIIM…KVNRKYRIAP (69 aa). Positions 244-288 form a coiled coil; sequence VAAARAVAEAEAIMAEAEAAAKEAEAAEAEAQAAQAFAEAAFLTL.

The protein belongs to the histone H1/H5 family. SMH subfamily. Forms a homodimer and heterodimers.

The protein resides in the nucleus. The protein localises to the chromosome. Its subcellular location is the nucleolus. It is found in the telomere. Binds preferentially double-stranded telomeric repeats, but may also bind to the single telomeric strand. This chain is Single myb histone 6 (SMH6), found in Zea mays (Maize).